The following is a 127-amino-acid chain: Large ribosomal subunit protein eL32 (127 aa).

The segment covering 37–48 has biased composition (basic and acidic residues); it reads KWRKPKGTDSKM. The tract at residues 37–65 is disordered; it reads KWRKPKGTDSKMRVKLKGKARSPSIGWSS.

Belongs to the eukaryotic ribosomal protein eL32 family.

The chain is Large ribosomal subunit protein eL32 from Thermococcus sibiricus (strain DSM 12597 / MM 739).